The primary structure comprises 509 residues: Maturase K (509 aa).

The protein belongs to the intron maturase 2 family. MatK subfamily.

The protein localises to the plastid. It is found in the chloroplast. In terms of biological role, usually encoded in the trnK tRNA gene intron. Probably assists in splicing its own and other chloroplast group II introns. This Metasequoia glyptostroboides (Dawn redwood) protein is Maturase K.